Here is a 1200-residue protein sequence, read N- to C-terminus: MDPPSLDTAIQHALAGLYPPFEATAPTVLGQVFRLLDSGFQGDGLSFLLDFLIPAKRLCEQVREAACAPYSHCLFLHEGWPLCLRDEVVVHLAPLNPLLLRQGDFYLQVEPQEEQSVCIMIKCLSLDLCTVDKKPVPEPAYPILFTQEWLEAINSDFEGNPLHNCLVASENGIAPVPWTKITSPEFVDDRPQVVNALCQAWGPLPLEALDLSSPQELHQASSPDNQVLPAQSLAKGKGRTYGSKYPGLIKVEQARCGEVAFRMDEVVSQDFEGDYVALLGFSQESRGESPSREAGTSSGCTSGALEEIAGTKETPLFQKILPLSEANEGPSLGNRACTKPESSEERPYNLGFRRKVNLKAPTHNSERPPQGSYMNVLEDALDCASGLRAGVSQEPAASKMQGPLGNPENMVQLRPGPRQASSPRLSPASPAAAASETKIEVKTKERNGRLPKPMPCPSRNTSSPEPPTPGLKFSFLRGQRQPSVTPEKASLQHNGPWKVLCSLYSPKPNRAKSLGKAGTTQTKTSGPATAPSPLTEEKAALPEASAGSPERGPTLEEEPPGPEPRIGALGVKVFRSRIACLPGGRDRAGRPLLLVSTTEGAWEAPWCTVSEVTKLLSYLCTIPRPEDKAKGLAVLIDARRQPPQPGLVSALQATQAQVPASIRAILFLGEKEAALQLQTLPDVQVEVLTSLKALSHHVDPSQLPAVLEGPFPYCHTEWVHFFQKLDPFLADLHQASSLLQASIEEFEKADPPGGMQEATRCLSKSKELMEAVLRDPGLLGLQREGGATLARLQHDASRLDFSPDVRSHLAAATALYSLVDEQLHVLVTASNSLLGKLELRVRLGRLEAAIHQVSDWMEQEGRRCLQSLTPKDGSLETVEKAHAEFENFFLQAAAQYRRGLELSKQAAQLGATARGAGEAERAEFPELAAFASTQRAFQAELTHFYMAAERQRTDLETLLHLHRFCKRMTWFHMDCQDLMAQLRLDKTSRVSPGDQRRLHRYLQRLASEFPAEKLAAVGLQVASLSRAGLGQELWEEARIRHEEIRMLLEKALTHSSCPEAPAAHSARPERRGVAAKGQGVSVEVTSKGRWDQPPLDSLGMDHLPKSYWPPGPPRGEQNRTFQAGSPPQEAGQAAEAEDGKGSHKLPDPAREHLLATTFFRQQPPRQSQVPRLTGGSFSSEGTDSQTSLEDSPQTSPLASL.

Disordered regions lie at residues 282 to 302 (SQES…GCTS), 323 to 372 (LSEA…PQGS), 392 to 491 (SQEP…KASL), 510 to 568 (RAKS…RIGA), and 1056 to 1200 (SCPE…LASL). Low complexity predominate over residues 420–435 (ASSPRLSPASPAAAAS). Positions 437-448 (TKIEVKTKERNG) are enriched in basic and acidic residues. Residues 518–527 (GTTQTKTSGP) show a composition bias toward polar residues. A compositionally biased stretch (basic and acidic residues) spans 1137–1153 (EDGKGSHKLPDPAREHL). Residues 1160 to 1171 (RQQPPRQSQVPR) show a composition bias toward low complexity. Residues 1175 to 1200 (GSFSSEGTDSQTSLEDSPQTSPLASL) are compositionally biased toward polar residues.

This is an uncharacterized protein from Homo sapiens (Human).